Consider the following 117-residue polypeptide: Virion membrane protein OPG147 (117 aa).

Residues 1 to 21 (MITLFLILCYFILIFNIIVPA) traverse the membrane as a helical; Signal-anchor for type III membrane protein segment. Residues 22 to 117 (ISEKMRRERA…RAYSDLFFTT (96 aa)) are Virion surface-facing.

The protein belongs to the orthopoxvirus OPG147 family. Part of a stable entry-fusion complex (EFC) which is at least composed of proteins OPG143, OPG147, OPG155, OPG086, OPG094, OPG107, OPG104, and OPG099. Formation of the viral membrane is necessary for the assembly of the complex. Post-translationally, contains two intramolecular disulfide bonds. They are created by the viral disulfide bond formation pathway, a poxvirus-specific pathway that operates on the cytoplasmic side of the MV membranes.

It localises to the virion membrane. Its function is as follows. Envelope protein part of the entry-fusion complex responsible for the virus membrane fusion with host cell membrane during virus entry. Also plays a role in cell-cell fusion (syncytium formation). The polypeptide is Virion membrane protein OPG147 (OPG147) (Homo sapiens (Human)).